We begin with the raw amino-acid sequence, 188 residues long: GMP synthase [glutamine-hydrolyzing] subunit A (188 aa).

In terms of domain architecture, Glutamine amidotransferase type-1 spans 2–188; the sequence is KVAVIYFGGQ…FKNFIKICRK (187 aa). The active-site Nucleophile is the cysteine 79. Catalysis depends on residues histidine 166 and glutamate 168.

Heterodimer composed of a glutamine amidotransferase subunit (A) and a GMP-binding subunit (B).

The catalysed reaction is XMP + L-glutamine + ATP + H2O = GMP + L-glutamate + AMP + diphosphate + 2 H(+). Its pathway is purine metabolism; GMP biosynthesis; GMP from XMP (L-Gln route): step 1/1. Its function is as follows. Catalyzes the synthesis of GMP from XMP. The chain is GMP synthase [glutamine-hydrolyzing] subunit A from Sulfolobus acidocaldarius (strain ATCC 33909 / DSM 639 / JCM 8929 / NBRC 15157 / NCIMB 11770).